The sequence spans 256 residues: DNA repair protein RecO (256 aa).

It belongs to the RecO family.

Its function is as follows. Involved in DNA repair and RecF pathway recombination. This Clostridium novyi (strain NT) protein is DNA repair protein RecO.